Reading from the N-terminus, the 96-residue chain is Co-chaperonin GroES (96 aa).

The protein belongs to the GroES chaperonin family. In terms of assembly, heptamer of 7 subunits arranged in a ring. Interacts with the chaperonin GroEL.

Its subcellular location is the cytoplasm. Functionally, together with the chaperonin GroEL, plays an essential role in assisting protein folding. The GroEL-GroES system forms a nano-cage that allows encapsulation of the non-native substrate proteins and provides a physical environment optimized to promote and accelerate protein folding. GroES binds to the apical surface of the GroEL ring, thereby capping the opening of the GroEL channel. This Vibrio atlanticus (strain LGP32) (Vibrio splendidus (strain Mel32)) protein is Co-chaperonin GroES.